The primary structure comprises 448 residues: Exodeoxyribonuclease 7 large subunit (448 aa).

The protein belongs to the XseA family. In terms of assembly, heterooligomer composed of large and small subunits.

The protein resides in the cytoplasm. It carries out the reaction Exonucleolytic cleavage in either 5'- to 3'- or 3'- to 5'-direction to yield nucleoside 5'-phosphates.. In terms of biological role, bidirectionally degrades single-stranded DNA into large acid-insoluble oligonucleotides, which are then degraded further into small acid-soluble oligonucleotides. The polypeptide is Exodeoxyribonuclease 7 large subunit (Exiguobacterium sp. (strain ATCC BAA-1283 / AT1b)).